A 515-amino-acid chain; its full sequence is Ribonuclease Y (515 aa).

The chain crosses the membrane as a helical span at residues 6-26 (LTSFVIITLSLAVGLTGGYYG). A KH domain is found at 205 to 290 (TVSVVPLPND…EMVEKARKEI (86 aa)). An HD domain is found at 331–424 (VLRHSVEVAH…VQAADAISAS (94 aa)).

The protein belongs to the RNase Y family.

The protein localises to the cell membrane. In terms of biological role, endoribonuclease that initiates mRNA decay. This Syntrophomonas wolfei subsp. wolfei (strain DSM 2245B / Goettingen) protein is Ribonuclease Y.